The primary structure comprises 108 residues: ADM5 (108 aa).

An N-terminal signal peptide occupies residues 1–18; it reads MTAHILLLWLFASSILGD. A propeptide spanning residues 19 to 25 is cleaved from the precursor; the sequence is PDSAGRL. An intrachain disulfide couples C38 to C43. A disordered region spans residues 61–108; the sequence is KELSGKAGRKPQDPYSYGRRRRRRRRRREARLLRRLQDPSLRRAQLAG. Y77 carries the post-translational modification Tyrosine amide. Basic residues predominate over residues 78 to 89; it reads GRRRRRRRRRRE. Positions 89 to 108 are excised as a propeptide; sequence EARLLRRLQDPSLRRAQLAG. Residues 90-101 are compositionally biased toward basic and acidic residues; that stretch reads ARLLRRLQDPSL.

Belongs to the adrenomedullin family. In terms of tissue distribution, expressed abundantly in the spleen and thymus. Also expressed in adrenal and pituitary. Not expressed in brain, heart, kidney, liver and stomach.

It is found in the secreted. Seems to have a peripheral vasodepressor effect and a central vasopressor effect. The polypeptide is ADM5 (ADM5) (Sus scrofa (Pig)).